The following is a 91-amino-acid chain: Potassium channel toxin MeuTXK-beta-2 (91 aa).

The signal sequence occupies residues 1–19; sequence MQRNLVVLLFLGMVALSSC. Residues 54 to 91 enclose the BetaSPN-type CS-alpha/beta domain; sequence QFGCSAYQGYCDDHCQDIEKKEGFCHGFKCKCGIPMGF. 3 cysteine pairs are disulfide-bonded: cysteine 57-cysteine 78, cysteine 64-cysteine 83, and cysteine 68-cysteine 85.

This sequence belongs to the long chain scorpion toxin family. Class 1 subfamily. Expressed by the venom gland.

The protein resides in the secreted. In terms of biological role, has a low affinity binding to potassium channels of rat brain synaptosomes. Displays weak antibacterial activity against Stenotrophomonas sp. Strongly inhibits the development of the Plasmodium berghei ookinetes. Displays slight hemolytic effect on mouse erythrocytes. Induces cytolysis on Xenopus oocytes at high concentrations. Is not toxic towards mice and towards the insect Tenebrio molitor. This chain is Potassium channel toxin MeuTXK-beta-2, found in Mesobuthus eupeus (Lesser Asian scorpion).